The chain runs to 398 residues: MSKEKVILAYSGGLDTSVAITWLKKDYDVVSVCMDVGEGKDLDFIHDKALKVGAVESYVIDVKDEFATDYVLVAHQSHAYYEQKYPLVSALSRPLISKKLVEIAHQIGATTIAHGCTGKGNDQVRFEVSIAALDLNLKVIAPVREWKWSREEEIYYAKENGVPVPADLDNPYSVDQNLWGRANECGILENPWNQAPEEAFGITTSPEQAPDMPEYIEIEFSEGVPVSLNGEVLKLADLIQKLNEIAGKHGVGRIDHVENRLVGIKSREIYECPGAVTLLTAHKEIEDLTLVREVAHFKPIIENELSNLIYNALWFSSATQALIAYIKETQKVVNGTAKVKLYKGSAQVVARKSPSSLYDENLATYTSADTFDQDAAVGFIKLWGLPTKVHSEVQKSAK.

Position 9-17 (9-17) interacts with ATP; sequence AYSGGLDTS. Tyr85 serves as a coordination point for L-citrulline. Residue Gly115 coordinates ATP. Positions 117, 121, and 122 each coordinate L-aspartate. Residue Asn121 participates in L-citrulline binding. L-citrulline is bound by residues Arg125, Ser173, Glu258, and Tyr270.

This sequence belongs to the argininosuccinate synthase family. Type 1 subfamily. In terms of assembly, homotetramer.

The protein resides in the cytoplasm. It carries out the reaction L-citrulline + L-aspartate + ATP = 2-(N(omega)-L-arginino)succinate + AMP + diphosphate + H(+). It participates in amino-acid biosynthesis; L-arginine biosynthesis; L-arginine from L-ornithine and carbamoyl phosphate: step 2/3. In Streptococcus pneumoniae (strain Hungary19A-6), this protein is Argininosuccinate synthase.